The chain runs to 485 residues: Hexokinase (485 aa).

S15 is modified (phosphoserine). A Hexokinase domain is found at 21–468 (ANLMEQIHGL…SGVGAAIIAC (448 aa)). The interval 75 to 208 (TGKETGDFLA…NIPINVVALI (134 aa)) is hexokinase small subdomain. Position 111 (K111) interacts with ATP. The glucose-binding stretch occupies residues 151–177 (PLGFTFSYPASQKKINSGVLQRWTKGF). The interval 209 to 457 (NDTTGTLVAS…HPIQLVAAED (249 aa)) is hexokinase large subdomain.

In terms of assembly, monomer and homodimer. The monomeric form is active, the homodimeric form inactive.

It carries out the reaction a D-hexose + ATP = a D-hexose 6-phosphate + ADP + H(+). It catalyses the reaction D-fructose + ATP = D-fructose 6-phosphate + ADP + H(+). The enzyme catalyses D-glucose + ATP = D-glucose 6-phosphate + ADP + H(+). It functions in the pathway carbohydrate metabolism; hexose metabolism. It participates in carbohydrate degradation; glycolysis; D-glyceraldehyde 3-phosphate and glycerone phosphate from D-glucose: step 1/4. Functionally, catalyzes the phosphorylation of hexose, such as D-glucose and D-fructose, to hexose 6-phosphate (D-glucose 6-phosphate and D-fructose 6-phosphate, respectively). Has higher affinity for D-glucose. Mediates the initial step of glycolysis by catalyzing phosphorylation of D-glucose to D-glucose 6-phosphate. The protein is Hexokinase (RAG5) of Kluyveromyces lactis (strain ATCC 8585 / CBS 2359 / DSM 70799 / NBRC 1267 / NRRL Y-1140 / WM37) (Yeast).